A 559-amino-acid polypeptide reads, in one-letter code: ADP,ATP carrier protein 1 (559 aa).

Residues 1–10 show a composition bias toward polar residues; it reads MNEVENNNHS. The segment at 1–22 is disordered; sequence MNEVENNNHSFPREDIPTEDEI. N-linked (GlcNAc...) asparagine glycosylation occurs at asparagine 8. Helical transmembrane passes span 46-66, 79-99, 111-131, and 174-194; these read FALLGLMFGIIGFIYSFMRIL, TILFIKIFYILPVSMALVFLI, IFSIFCGGFASLFFLCGAVFL, and IVFISAEMWGSLVLSYLFLSF. A glycan (N-linked (GlcNAc...) asparagine) is linked at asparagine 196. 2 consecutive transmembrane segments (helical) span residues 210–230 and 242–262; these read PLIIITNVSLFLSATVAGAFF and QVLLSGIFIFQGFLVVLVIFL. A glycan (N-linked (GlcNAc...) asparagine) is linked at asparagine 290. 3 consecutive transmembrane segments (helical) span residues 305–325, 354–373, and 377–397; these read LLLAMSLIVLFFNISYNMVES, QYMTSVVVICLNLSPFSSYV, and GFLLVGLITPIVTLMAIVLFL. The N-linked (GlcNAc...) asparagine glycan is linked to asparagine 403. The next 3 membrane-spanning stretches (helical) occupy residues 425-447, 473-493, and 503-523; these read YVLENYFGVIFMSLLKITKYSAF, IFGKLGKSIGSIYGLLMFEAL, and PITAGIIFIFIVMWVKAIIYL.

It belongs to the ADP/ATP translocase tlc family.

Its subcellular location is the cell membrane. Functionally, ATP transporter involved in the uptake of ATP from the host cell cytoplasm. Provides the microsporidian cell with host ATP in exchange for ADP. This is an obligate exchange system. This energy acquiring activity is an important component of microsporidian parasitism. This is ADP,ATP carrier protein 1 (NTT1) from Encephalitozoon cuniculi (strain GB-M1) (Microsporidian parasite).